A 361-amino-acid chain; its full sequence is Histidinol-phosphate aminotransferase (361 aa).

At K221 the chain carries N6-(pyridoxal phosphate)lysine.

This sequence belongs to the class-II pyridoxal-phosphate-dependent aminotransferase family. Histidinol-phosphate aminotransferase subfamily. Homodimer. Requires pyridoxal 5'-phosphate as cofactor.

The catalysed reaction is L-histidinol phosphate + 2-oxoglutarate = 3-(imidazol-4-yl)-2-oxopropyl phosphate + L-glutamate. It participates in amino-acid biosynthesis; L-histidine biosynthesis; L-histidine from 5-phospho-alpha-D-ribose 1-diphosphate: step 7/9. The protein is Histidinol-phosphate aminotransferase of Symbiobacterium thermophilum (strain DSM 24528 / JCM 14929 / IAM 14863 / T).